The chain runs to 294 residues: MSHKRMFTRLAAATSAAVLAGITLTACGDSEGGDGLLAAIENGNVTIGTKYDQPGLGLRNPDNSMSGLDVDVAQYVVNSIADDNGWDHPTVEWRETPSAQRETLIQNGEVDMIAATYSINPGRSESVNFGGPYLLTHQALLVREDDDRIQTLEDLDDGLILCSVTGSTPAQKVKDVLPGVQLQEYDTYSSCVEALSQGNVDAMTTDATILFGYAQQREGEFRVVEMEQDGEPFTNEYYGIGITKDDTEATDAINAALERMYADGSFQRFLTENLGEDSQVVQEGTPGDLSFLDE.

Positions Met-1 to Ala-26 are cleaved as a signal peptide. Cys-27 is lipidated: N-palmitoyl cysteine. Cys-27 is lipidated: S-diacylglycerol cysteine.

Belongs to the bacterial solute-binding protein 3 family. As to quaternary structure, the complex is composed of two ATP-binding proteins (GluA), two transmembrane proteins (GluC and GluD) and a solute-binding protein (GluB).

It is found in the cell membrane. Its function is as follows. Part of the ABC transporter complex GluABCD involved in glutamate uptake. Binds glutamate with a high affinity. The sequence is that of Glutamate-binding protein GluB from Corynebacterium efficiens (strain DSM 44549 / YS-314 / AJ 12310 / JCM 11189 / NBRC 100395).